Consider the following 71-residue polypeptide: Defensin 1 (71 aa).

Residues 1–25 form the signal peptide; that stretch reads KTVAGFCIFFLVLFLAQEGVVKTEA. 3 cysteine pairs are disulfide-bonded: Cys28/Cys71, Cys39/Cys60, and Cys45/Cys65.

Belongs to the DEFL family. As to quaternary structure, may form dimers. Not glycosylated. In terms of processing, contains 4 disulfide bonds. Post-translationally, met-61 and Met-63 might be oxidized in some molecules.

Its function is as follows. Probably has antifungal activity. The polypeptide is Defensin 1 (Arachis hypogaea (Peanut)).